Reading from the N-terminus, the 200-residue chain is Holliday junction branch migration complex subunit RuvA (200 aa).

The interval 1 to 63 (MIASVRGVVT…EDSLTLYGFA (63 aa)) is domain I. The segment at 64–142 (DDDAKALFEL…PVPVGADSAA (79 aa)) is domain II. Positions 143-151 (GVTTGAWPE) are flexible linker. The segment at 151 to 200 (EQVRQALVGLGWTAAQADQAVTAVAETVDGAVPPVPVLLRQAIRLLGRTR) is domain III.

The protein belongs to the RuvA family. Homotetramer. Forms an RuvA(8)-RuvB(12)-Holliday junction (HJ) complex. HJ DNA is sandwiched between 2 RuvA tetramers; dsDNA enters through RuvA and exits via RuvB. An RuvB hexamer assembles on each DNA strand where it exits the tetramer. Each RuvB hexamer is contacted by two RuvA subunits (via domain III) on 2 adjacent RuvB subunits; this complex drives branch migration. In the full resolvosome a probable DNA-RuvA(4)-RuvB(12)-RuvC(2) complex forms which resolves the HJ.

It is found in the cytoplasm. Its function is as follows. The RuvA-RuvB-RuvC complex processes Holliday junction (HJ) DNA during genetic recombination and DNA repair, while the RuvA-RuvB complex plays an important role in the rescue of blocked DNA replication forks via replication fork reversal (RFR). RuvA specifically binds to HJ cruciform DNA, conferring on it an open structure. The RuvB hexamer acts as an ATP-dependent pump, pulling dsDNA into and through the RuvAB complex. HJ branch migration allows RuvC to scan DNA until it finds its consensus sequence, where it cleaves and resolves the cruciform DNA. This chain is Holliday junction branch migration complex subunit RuvA, found in Salinispora tropica (strain ATCC BAA-916 / DSM 44818 / JCM 13857 / NBRC 105044 / CNB-440).